The following is a 120-amino-acid chain: Putative defensin-like protein 179 (120 aa).

An N-terminal signal peptide occupies residues 1 to 27 (MERTSTSLLFLLSLLIIFASAVNQIRA). 7 disulfides stabilise this stretch: Cys37/Cys56, Cys40/Cys63, Cys44/Cys65, Cys74/Cys120, Cys85/Cys105, Cys90/Cys114, and Cys94/Cys116.

The protein belongs to the DEFL family.

It localises to the secreted. The chain is Putative defensin-like protein 179 (LCR57) from Arabidopsis thaliana (Mouse-ear cress).